Reading from the N-terminus, the 475-residue chain is Ankyrin repeat, SAM and basic leucine zipper domain-containing protein 1 (475 aa).

The tract at residues 1–25 (MAASALRGLPVAGGGESSESEDDGW) is disordered. 3 positions are modified to phosphoserine: Ser-17, Ser-18, and Ser-20. ANK repeat units follow at residues 45 to 74 (EKKE…SVDS), 78 to 107 (YGWT…NASF), 110 to 144 (DKQS…DPNV), 148 to 177 (RLMT…EVNT), 181 to 210 (NGYT…NKML), and 214 to 243 (DGKM…PLEG). The region spanning 272-334 (SYTAFGDLEV…KILAALKELQ (63 aa)) is the SAM domain.

Interacts with DDX4, PIWIL1, RANBP9 and TDRD1. As to expression, expressed exclusively in the testis and ovary and at higher levels in the adult testis compared with the adult ovary.

It is found in the cytoplasm. In terms of biological role, plays a central role during spermatogenesis by repressing transposable elements and preventing their mobilization, which is essential for the germline integrity. Acts via the piRNA metabolic process, which mediates the repression of transposable elements during meiosis by forming complexes composed of piRNAs and Piwi proteins and governs the methylation and subsequent repression of transposons. Its association with pi-bodies suggests a participation in the primary piRNAs metabolic process. Required prior to the pachytene stage to facilitate the production of multiple types of piRNAs, including those associated with repeats involved in the regulation of retrotransposons. May act by mediating protein-protein interactions during germ cell maturation. The chain is Ankyrin repeat, SAM and basic leucine zipper domain-containing protein 1 from Homo sapiens (Human).